The following is a 349-amino-acid chain: UPF0324 inner membrane protein YeiH (349 aa).

The Periplasmic segment spans residues Met1–Thr12. A helical transmembrane segment spans residues Leu13–Trp32. The Cytoplasmic segment spans residues Gly33–Ser35. Residues Ile36–Gly58 traverse the membrane as a helical segment. Over Asn59 to Asp99 the chain is Periplasmic. The chain crosses the membrane as a helical span at residues Val100–Leu122. The Cytoplasmic segment spans residues Gly123–Lys131. Residues His132 to Ala151 traverse the membrane as a helical segment. At Thr152–Lys162 the chain is on the periplasmic side. A helical membrane pass occupies residues Val163–Tyr185. Topologically, residues Pro186 to Lys261 are cytoplasmic. The chain crosses the membrane as a helical span at residues Ile262 to Leu283. The Periplasmic segment spans residues Pro284 to Asn289. The helical transmembrane segment at Met290–Val312 threads the bilayer. Residues Ser313 to Lys321 lie on the Cytoplasmic side of the membrane. Residues Pro322 to Ile344 traverse the membrane as a helical segment. The Periplasmic portion of the chain corresponds to Gln345–Ala349.

This sequence belongs to the UPF0324 family.

Its subcellular location is the cell inner membrane. This is UPF0324 inner membrane protein YeiH (yeiH) from Escherichia coli O157:H7.